Consider the following 479-residue polypeptide: RAC-gamma serine/threonine-protein kinase (479 aa).

Ser-2 carries the post-translational modification N-acetylserine. Residues Thr-5 to Asp-107 enclose the PH domain. Cysteines 59 and 76 form a disulfide. The Protein kinase domain occupies Phe-148–Phe-405. ATP-binding positions include Leu-154–Val-162 and Lys-177. The active-site Proton acceptor is the Asp-271. A disulfide bridge connects residues Cys-293 and Cys-307. An O-linked (GlcNAc) threonine glycan is attached at Thr-302. Phosphothreonine; by PDPK1 is present on Thr-305. O-linked (GlcNAc) threonine glycosylation is present at Thr-309. Residues Ser-406–Glu-479 enclose the AGC-kinase C-terminal domain. The residue at position 447 (Thr-447) is a Phosphothreonine. The interval Asp-458–Glu-479 is disordered. Phosphoserine; by PKC/PRKCZ is present on Ser-472. The O-linked (GlcNAc) serine; alternate glycan is linked to Ser-472.

It belongs to the protein kinase superfamily. AGC Ser/Thr protein kinase family. RAC subfamily. As to quaternary structure, interacts (via PH domain) with TCL1A; this enhances AKT3 phosphorylation and activation. Interacts with TRAF6. Interacts with KCTD20. Interacts with BTBD10. Phosphorylation on Thr-305 and Ser-472 is required for full activity. Phosphorylation of the activation loop at Thr-305 by PDPK1/PDK1 is a prerequisite for full activation. Phosphorylation at Ser-472 by mTORC2 in response to growth factors plays a key role in AKT1 activation by facilitating subsequent phosphorylation of the activation loop by PDPK1/PDK1. In terms of processing, ubiquitinated. When fully phosphorylated and translocated into the nucleus, undergoes 'Lys-48'-polyubiquitination catalyzed by TTC3, leading to its degradation by the proteasome. Post-translationally, O-GlcNAcylation at Thr-302 and Thr-309 inhibits activating phosphorylation at Thr-305 via disrupting the interaction between AKT and PDPK1/PDK1. In adult tissues, it is highly expressed in brain, lung and kidney, but weakly in heart, testis and liver. In fetal tissues, it is highly expressed in heart, liver and brain and not at all in kidney.

Its subcellular location is the nucleus. It localises to the cytoplasm. The protein localises to the membrane. The catalysed reaction is L-seryl-[protein] + ATP = O-phospho-L-seryl-[protein] + ADP + H(+). It carries out the reaction L-threonyl-[protein] + ATP = O-phospho-L-threonyl-[protein] + ADP + H(+). Its activity is regulated as follows. Two specific sites, one in the kinase domain (Thr-305) and the other in the C-terminal regulatory region (Ser-472), need to be phosphorylated for its full activation. IGF-1 leads to the activation of AKT3, which may play a role in regulating cell survival. Its function is as follows. AKT3 is one of 3 closely related serine/threonine-protein kinases (AKT1, AKT2 and AKT3) called the AKT kinase, and which regulate many processes including metabolism, proliferation, cell survival, growth and angiogenesis. This is mediated through serine and/or threonine phosphorylation of a range of downstream substrates. Over 100 substrate candidates have been reported so far, but for most of them, no isoform specificity has been reported. AKT3 is the least studied AKT isoform. It plays an important role in brain development and is crucial for the viability of malignant glioma cells. AKT3 isoform may also be the key molecule in up-regulation and down-regulation of MMP13 via IL13. Required for the coordination of mitochondrial biogenesis with growth factor-induced increases in cellular energy demands. Down-regulation by RNA interference reduces the expression of the phosphorylated form of BAD, resulting in the induction of caspase-dependent apoptosis. In Homo sapiens (Human), this protein is RAC-gamma serine/threonine-protein kinase (AKT3).